The following is a 763-amino-acid chain: Putative pentatricopeptide repeat-containing protein At1g74580 (763 aa).

19 PPR repeats span residues Thr-39–Asn-69, Leu-75–Pro-109, Thr-110–Pro-144, Asp-145–Met-179, Asn-180–Leu-214, Cys-215–Pro-249, Asn-250–Pro-284, Asp-285–Pro-319, Asp-320–Pro-354, Asp-355–Pro-389, Asn-390–Pro-424, Glu-425–Pro-459, Asp-460–Pro-494, Asp-495–Pro-529, Asn-530–Pro-564, Asp-565–Ala-595, Ser-601–Pro-635, Asp-636–Pro-670, and Ser-671–Pro-705.

It belongs to the PPR family. P subfamily.

The sequence is that of Putative pentatricopeptide repeat-containing protein At1g74580 from Arabidopsis thaliana (Mouse-ear cress).